Reading from the N-terminus, the 400-residue chain is Aspartate aminotransferase (400 aa).

L-aspartate-binding residues include glycine 42 and asparagine 180. Lysine 241 is subject to N6-(pyridoxal phosphate)lysine. Arginine 373 is a binding site for L-aspartate.

Belongs to the class-I pyridoxal-phosphate-dependent aminotransferase family. In terms of assembly, homodimer. It depends on pyridoxal 5'-phosphate as a cofactor.

It localises to the cytoplasm. It catalyses the reaction L-aspartate + 2-oxoglutarate = oxaloacetate + L-glutamate. This is Aspartate aminotransferase (aspC) from Sulfolobus acidocaldarius (strain ATCC 33909 / DSM 639 / JCM 8929 / NBRC 15157 / NCIMB 11770).